We begin with the raw amino-acid sequence, 379 residues long: Cytochrome b (379 aa).

The next 4 helical transmembrane spans lie at F34 to M54, W78 to I99, W114 to L134, and F179 to T199. Residues H84 and H98 each contribute to the heme b site. 2 residues coordinate heme b: H183 and H197. A ubiquinone is bound at residue H202. A run of 4 helical transmembrane segments spans residues L227–S247, L289–H309, F321–S341, and F348–P368.

Belongs to the cytochrome b family. As to quaternary structure, the cytochrome bc1 complex contains 11 subunits: 3 respiratory subunits (MT-CYB, CYC1 and UQCRFS1), 2 core proteins (UQCRC1 and UQCRC2) and 6 low-molecular weight proteins (UQCRH/QCR6, UQCRB/QCR7, UQCRQ/QCR8, UQCR10/QCR9, UQCR11/QCR10 and a cleavage product of UQCRFS1). This cytochrome bc1 complex then forms a dimer. It depends on heme b as a cofactor.

Its subcellular location is the mitochondrion inner membrane. Functionally, component of the ubiquinol-cytochrome c reductase complex (complex III or cytochrome b-c1 complex) that is part of the mitochondrial respiratory chain. The b-c1 complex mediates electron transfer from ubiquinol to cytochrome c. Contributes to the generation of a proton gradient across the mitochondrial membrane that is then used for ATP synthesis. The chain is Cytochrome b (MT-CYB) from Apteryx australis (Southern brown kiwi).